Here is a 557-residue protein sequence, read N- to C-terminus: Copine-6 (557 aa).

2 consecutive C2 domains span residues 1–127 (MSDP…TKPL) and 134–263 (NAGK…MQWD). Positions 167, 173, 229, 231, and 237 each coordinate Ca(2+). Residues 244–303 (STFQEMQEGTANPGQEMQWDCINPKYRDKKKHYKSSGTVVLAQCTVEKVHTFLDYIMGGC) form a linker region region. Residues 306–526 (SFTVAIDFTA…ALAKCVLAEV (221 aa)) enclose the VWFA domain.

This sequence belongs to the copine family. As to quaternary structure, interacts (via second C2 domain) with OS9 (via C-terminus); this interaction occurs in a calcium-dependent manner in vitro. May interact with NECAB1. It depends on Ca(2+) as a cofactor.

The protein localises to the cytoplasm. It localises to the cell membrane. It is found in the endosome. The protein resides in the cytoplasmic vesicle. Its subcellular location is the clathrin-coated vesicle. The protein localises to the perikaryon. It localises to the cell projection. It is found in the dendrite. Calcium-dependent phospholipid-binding protein that plays a role in calcium-mediated intracellular processes. Binds phospholipid membranes in a calcium-dependent manner. Plays a role in dendrite formation by melanocytes. The sequence is that of Copine-6 from Bos taurus (Bovine).